The sequence spans 491 residues: Chromosomal replication initiator protein DnaA (491 aa).

A domain I, interacts with DnaA modulators region spans residues Met1–Leu69. Positions Leu69 to Leu154 are domain II. Positions Pro155 to Ser371 are domain III, AAA+ region. The ATP site is built by Gly199, Gly201, Lys202, and Thr203. Positions Lys372–Arg491 are domain IV, binds dsDNA.

The protein belongs to the DnaA family. In terms of assembly, oligomerizes as a right-handed, spiral filament on DNA at oriC.

It localises to the cytoplasm. Plays an essential role in the initiation and regulation of chromosomal replication. ATP-DnaA binds to the origin of replication (oriC) to initiate formation of the DNA replication initiation complex once per cell cycle. Binds the DnaA box (a 9 base pair repeat at the origin) and separates the double-stranded (ds)DNA. Forms a right-handed helical filament on oriC DNA; dsDNA binds to the exterior of the filament while single-stranded (ss)DNA is stabiized in the filament's interior. The ATP-DnaA-oriC complex binds and stabilizes one strand of the AT-rich DNA unwinding element (DUE), permitting loading of DNA polymerase. After initiation quickly degrades to an ADP-DnaA complex that is not apt for DNA replication. Binds acidic phospholipids. This Francisella tularensis subsp. holarctica (strain OSU18) protein is Chromosomal replication initiator protein DnaA.